Here is a 176-residue protein sequence, read N- to C-terminus: MSDKPASMYRTIDKPSYTRREYITGIPGSKIAQHNMGDLSAEPDDYPVQISLRVEEELQIRHGSLESSRLSANRHLIKELGEGNYKMTLRKFPHQVIRENKQATGAGADRVSDGMRQAFGKPVGTAARLNKDDIVFTAYCDVEQASVVKEAFRRAYNKLSPPCRITVDRGEELLVS.

This sequence belongs to the universal ribosomal protein uL16 family.

This Halorubrum lacusprofundi (strain ATCC 49239 / DSM 5036 / JCM 8891 / ACAM 34) protein is Large ribosomal subunit protein uL16.